We begin with the raw amino-acid sequence, 316 residues long: CRISPR-associated endonuclease Cas1 (316 aa).

E143, H206, and E221 together coordinate Mn(2+).

This sequence belongs to the CRISPR-associated endonuclease Cas1 family. Homodimer, forms a heterotetramer with a Cas2 homodimer. The cofactor is Mg(2+). It depends on Mn(2+) as a cofactor.

Functionally, CRISPR (clustered regularly interspaced short palindromic repeat), is an adaptive immune system that provides protection against mobile genetic elements (viruses, transposable elements and conjugative plasmids). CRISPR clusters contain spacers, sequences complementary to antecedent mobile elements, and target invading nucleic acids. CRISPR clusters are transcribed and processed into CRISPR RNA (crRNA). Acts as a dsDNA endonuclease. Involved in the integration of spacer DNA into the CRISPR cassette. This is CRISPR-associated endonuclease Cas1 from Aquifex aeolicus (strain VF5).